A 527-amino-acid polypeptide reads, in one-letter code: Putative transcription factor p65 homolog (527 aa).

The RHD domain maps to 18–306 (PPVEIIEQPK…HIDEKRKRTL (289 aa)). S276 bears the Phosphoserine; by PKA mark. The short motif at 301 to 304 (KRKR) is the Nuclear localization signal element. Transcriptional activation domain regions lie at residues 381-444 (ISDF…DFSQ) and 494-527 (DSGLINGMFDISREEIHLTSLFELDFSSLLSNMK). Residues 513–521 (SLFELDFSS) carry the 9aaTAD motif.

Predominantly in the animal hemisphere of the oocyte; all tissues of early embryo.

Its subcellular location is the nucleus. It is found in the cytoplasm. In terms of biological role, NF-kappa-B is a pleiotropic transcription factor present in almost all cell types and is the endpoint of a series of signal transduction events that are initiated by a vast array of stimuli related to many biological processes such as inflammation, immunity, differentiation, cell growth, tumorigenesis and apoptosis. NF-kappa-B is a homo- or heterodimeric complex formed by the Rel-like domain-containing proteins. The dimers bind at kappa-B sites in the DNA of their target genes and the individual dimers have distinct preferences for different kappa-B sites that they can bind with distinguishable affinity and specificity. Different dimer combinations act as transcriptional activators or repressors, respectively. NF-kappa-B is controlled by various mechanisms of post-translational modification and subcellular compartmentalization as well as by interactions with other cofactors or corepressors. NF-kappa-B complexes are held in the cytoplasm in an inactive state complexed with members of the NF-kappa-B inhibitor (I-kappa-B) family. In a conventional activation pathway, I-kappa-B is phosphorylated by I-kappa-B kinases (IKKs) in response to different activators, subsequently degraded thus liberating the active NF-kappa-B complex which translocates to the nucleus. RELA shows a weak DNA-binding site which could contribute directly to DNA binding in the NF-kappa-B complex. The chain is Putative transcription factor p65 homolog (rela) from Xenopus laevis (African clawed frog).